The primary structure comprises 328 residues: MTQGSALPVLGAGGWGTALAVAAARAGQPARLWARRPDFAARLAEVRENREYLPGVLLPPEVAVTSDLPGAVAGADFALLVVPSVGVPELLAGLPRELGVVLCAKGLAPDGSRLSEYAAGLGFDRVAVLSGPNHAEEIGRGLPAATVVASRDPALAAAVQTALMSPSLRVYTSRDVPGVELGGVLKNVIAVAAGMGDGLHLGDNAKATLLTRGLREMNRYLRSLGAEEETVYGLSGLGDLIATATSPHSRNRAAGEAIARGESPQQGGKVVEGLRTAGLLDAWAAAHGHDLPIVRAVAQVTRGEWSPAEGVRHLMGREAKGETEAGEP.

Residues tryptophan 15, arginine 35, arginine 36, and lysine 105 each coordinate NADPH. Positions 105 and 131 each coordinate sn-glycerol 3-phosphate. NADPH is bound at residue alanine 135. Residues lysine 186, aspartate 239, serine 249, arginine 250, and asparagine 251 each contribute to the sn-glycerol 3-phosphate site. Catalysis depends on lysine 186, which acts as the Proton acceptor. An NADPH-binding site is contributed by arginine 250. NADPH-binding residues include valine 270 and glutamate 272.

The protein belongs to the NAD-dependent glycerol-3-phosphate dehydrogenase family.

The protein resides in the cytoplasm. The enzyme catalyses sn-glycerol 3-phosphate + NAD(+) = dihydroxyacetone phosphate + NADH + H(+). The catalysed reaction is sn-glycerol 3-phosphate + NADP(+) = dihydroxyacetone phosphate + NADPH + H(+). The protein operates within membrane lipid metabolism; glycerophospholipid metabolism. Catalyzes the reduction of the glycolytic intermediate dihydroxyacetone phosphate (DHAP) to sn-glycerol 3-phosphate (G3P), the key precursor for phospholipid synthesis. The chain is Glycerol-3-phosphate dehydrogenase [NAD(P)+] from Deinococcus radiodurans (strain ATCC 13939 / DSM 20539 / JCM 16871 / CCUG 27074 / LMG 4051 / NBRC 15346 / NCIMB 9279 / VKM B-1422 / R1).